A 458-amino-acid polypeptide reads, in one-letter code: Ammonium transporter Rh type B (458 aa).

At 1–13 the chain is on the cytoplasmic side; the sequence is MAGSPSRAAGRRL. The chain crosses the membrane as a helical span at residues 14–34; sequence QLPLLCLFLQGATAVLFAVFV. At 35–61 the chain is on the extracellular side; it reads RYNHKTDAALWHRSNHSNADNEFYFRY. The N-linked (GlcNAc...) asparagine glycan is linked to asparagine 49. Residues 62–82 form a helical membrane-spanning segment; that stretch reads PSFQDVHAMVFVGFGFLMVFL. Residues 83 to 86 lie on the Cytoplasmic side of the membrane; it reads QRYG. A helical membrane pass occupies residues 87–107; that stretch reads FSSVGFTFLLAAFALQWSTLV. The Extracellular segment spans residues 108 to 124; that stretch reads QGFLHSFHGGHIHVGVE. The helical transmembrane segment at 125-145 threads the bilayer; the sequence is SMINADFCAGAVLISFGAVLG. The Cytoplasmic segment spans residues 146–149; it reads KTGP. A helical transmembrane segment spans residues 150 to 170; the sequence is AQLLLMALLEVVLFGINEFVL. Over 171 to 178 the chain is Extracellular; it reads LHLLGVRD. Residues 179–201 traverse the membrane as a helical segment; sequence AGGSMTIHTFGAYFGLVLSRVLY. Topologically, residues 202-219 are cytoplasmic; sequence RPQLEKSKHRQGSVYHSD. The helical transmembrane segment at 220–240 threads the bilayer; the sequence is LFTMIGTIFLWIFWPSFNAAL. The Extracellular portion of the chain corresponds to 241–251; it reads TALGAGQHRTA. A helical membrane pass occupies residues 252–272; that stretch reads LNTYYSLAASTLGTFALSALV. The Cytoplasmic segment spans residues 273-282; it reads GEDGRLDMVH. A helical membrane pass occupies residues 283 to 303; it reads IQNAALTGGVVVGTSSKMMLT. Residue proline 304 is a topological domain, extracellular. Residues 305-325 form a helical membrane-spanning segment; it reads FGALAAGFLAGTVSTLGYKFF. The Cytoplasmic portion of the chain corresponds to 326–346; the sequence is TPILESKFKVQDTCGVHNLHG. A helical membrane pass occupies residues 347-367; the sequence is MPGVLGALLGVLVAGLATHEA. At 368-393 the chain is on the extracellular side; sequence YGDGLESVFPLIAEGQRSATSQAMHQ. The chain crosses the membrane as a helical span at residues 394 to 414; that stretch reads LFGLFVTLMFASVGGGLGGLL. Over 415–458 the chain is Cytoplasmic; the sequence is LKLPFLDSPPDSQCYEDQVHWQVPGEHEDKAQRPLRVEEADTYA. Residues 416 to 424 are interaction with ANK3; sequence KLPFLDSPP. The short motif at 429-432 is the Basolateral sorting signal element; it reads YEDQ. Residues 439 to 458 form a disordered region; the sequence is GEHEDKAQRPLRVEEADTYA.

The protein belongs to the ammonium transporter (TC 2.A.49) family. Rh subfamily. Interacts (via C-terminus) with ANK2 and ANK3; required for targeting to the basolateral membrane. Post-translationally, N-glycosylated.

It is found in the cell membrane. The protein resides in the basolateral cell membrane. The catalysed reaction is NH4(+)(in) = NH4(+)(out). It carries out the reaction methylamine(out) = methylamine(in). It catalyses the reaction CO2(out) = CO2(in). In terms of biological role, ammonium transporter involved in the maintenance of acid-base homeostasis. Transports ammonium and its related derivative methylammonium across the basolateral plasma membrane of epithelial cells likely contributing to renal transepithelial ammonia transport and ammonia metabolism. May transport either NH4(+) or NH3 ammonia species predominantly mediating an electrogenic NH4(+) transport. May act as a CO2 channel providing for renal acid secretion. The polypeptide is Ammonium transporter Rh type B (RHBG) (Gorilla gorilla gorilla (Western lowland gorilla)).